A 205-amino-acid polypeptide reads, in one-letter code: Inosine triphosphate pyrophosphatase (205 aa).

ITP is bound at residue 20–25 (TGNAKK). Position 48 (Glu48) interacts with Mg(2+). Residues Lys60, 76 to 77 (DT), Lys93, 152 to 155 (FGWD), Lys175, and 180 to 181 (HR) contribute to the ITP site.

It belongs to the HAM1 NTPase family. As to quaternary structure, homodimer. It depends on Mg(2+) as a cofactor. The cofactor is Mn(2+).

It localises to the cytoplasm. It carries out the reaction ITP + H2O = IMP + diphosphate + H(+). The enzyme catalyses dITP + H2O = dIMP + diphosphate + H(+). It catalyses the reaction XTP + H2O = XMP + diphosphate + H(+). Pyrophosphatase that hydrolyzes non-canonical purine nucleotides such as inosine triphosphate (ITP), deoxyinosine triphosphate (dITP) or xanthosine 5'-triphosphate (XTP) to their respective monophosphate derivatives. The enzyme does not distinguish between the deoxy- and ribose forms. Probably excludes non-canonical purines from RNA and DNA precursor pools, thus preventing their incorporation into RNA and DNA and avoiding chromosomal lesions. This chain is Inosine triphosphate pyrophosphatase, found in Oryza sativa subsp. japonica (Rice).